An 847-amino-acid polypeptide reads, in one-letter code: DNA ligase (847 aa).

The segment covering 1–22 has biased composition (low complexity); the sequence is MSDTTTGSDAADAAVPATTPAD. Positions 1–23 are disordered; it reads MSDTTTGSDAADAAVPATTPADL. NAD(+)-binding positions include 54-58, 104-105, and Glu-135; these read DAEYD and SL. The active-site N6-AMP-lysine intermediate is Lys-137. NAD(+) contacts are provided by Arg-158, Glu-195, Lys-326, and Lys-350. Zn(2+) is bound by residues Cys-444, Cys-447, Cys-463, and Cys-469. The region spanning 686-775 is the BRCT domain; that stretch reads AAGGVLAGLA…PDAIALPEAD (90 aa). The interval 770–847 is disordered; it reads ALPEADPVPD…AEPDGPAETP (78 aa). Composition is skewed to low complexity over residues 786 to 807 and 819 to 833; these read DGGS…ATAE and PAAA…VEAG.

This sequence belongs to the NAD-dependent DNA ligase family. LigA subfamily. Mg(2+) is required as a cofactor. Mn(2+) serves as cofactor.

It carries out the reaction NAD(+) + (deoxyribonucleotide)n-3'-hydroxyl + 5'-phospho-(deoxyribonucleotide)m = (deoxyribonucleotide)n+m + AMP + beta-nicotinamide D-nucleotide.. DNA ligase that catalyzes the formation of phosphodiester linkages between 5'-phosphoryl and 3'-hydroxyl groups in double-stranded DNA using NAD as a coenzyme and as the energy source for the reaction. It is essential for DNA replication and repair of damaged DNA. This Clavibacter sepedonicus (Clavibacter michiganensis subsp. sepedonicus) protein is DNA ligase.